Consider the following 818-residue polypeptide: H(+)/Cl(-) exchange transporter 3 (818 aa).

Over 1-125 the chain is Cytoplasmic; sequence MESEQLFHRG…WEMTKSLYDA (125 aa). 3 short sequence motifs (di-leucine internalization motif; mediates targeting to late endosome and lysosome membranes) span residues 28–29, 46–47, and 71–75; these read LL and LLDLL. Residues 126 to 163 form a helical membrane-spanning segment; sequence WSGWLVVTLTGLASGALAGLIDIAADWMTDLKEGICLS. Asn177 carries an N-linked (GlcNAc...) asparagine glycan. Residues 209-232 form a helical membrane-spanning segment; the sequence is MNYIMYIFWALSFAFLAVSLVKVF. Positions 238–242 match the Selectivity filter part_1 motif; sequence GSGIP. A chloride-binding site is contributed by Ser239. Positions 241–248 form an intramembrane region, helical; it reads IPEIKTIL. Helical transmembrane passes span 258–276 and 282–301; these read GKWT…VASG and EGPL…YLFP. The short motif at 280–284 is the Selectivity filter part_2 element; the sequence is GKEGP. Intramembrane regions (helical) lie at residues 313–325 and 329–337; these read VLSA…VSVA and PIGGVLFSL. 3 consecutive transmembrane segments (helical) span residues 349–367, 391–416, and 423–443; these read LWRS…RSIN, FPFI…AWCR, and FGKY…VIAF. N-linked (GlcNAc...) asparagine glycans are attached at residues Asn451 and Asn479. Helical transmembrane passes span 500–520 and 525–544; these read IWQL…TFGI and GLFI…VGIA. A Selectivity filter part_3 motif is present at residues 525-529; it reads GLFIP. Phe527 serves as a coordination point for chloride. 2 intramembrane regions (helical) span residues 572 to 586 and 590 to 601; these read GLYA…LGGV and TVSLVVIVFELT. Residues 602–605 constitute an intramembrane region (note=Loop between two helices); the sequence is GGLE. The helical transmembrane segment at 606 to 624 threads the bilayer; sequence YIVPLMAAVMTSKWVGDAF. Residues 625 to 818 are Cytoplasmic-facing; it reads GREGIYEAHI…NQDPASIMFN (194 aa). Tyr630 is a chloride binding site. CBS domains follow at residues 658-722 and 755-812; these read MRPR…ARKK and LDMS…NQDP. ATP is bound by residues 689 to 691 and 796 to 799; these read YNG and TKKD.

It belongs to the chloride channel (TC 2.A.49) family. ClC-3/CLCN3 subfamily. As to quaternary structure, monomer and homodimer. Forms heterodimers with CLCN4. N-glycosylated. As to expression, abundant in brain, especially in the olfactory bulb, hippocampus, and cerebellum. A moderate expression is seen in the lung, kidney and adrenal gland.

The protein resides in the lysosome membrane. The protein localises to the late endosome membrane. It localises to the cell membrane. Its subcellular location is the early endosome membrane. Functionally, strongly outwardly rectifying, electrogenic H(+)/Cl(-)exchanger which mediates the exchange of chloride ions against protons. The CLC channel family contains both chloride channels and proton-coupled anion transporters that exchange chloride or another anion for protons. The presence of conserved gating glutamate residues is typical for family members that function as antiporters. In terms of biological role, strongly outwardly rectifying, electrogenic H(+)/Cl(-)exchanger which mediates the exchange of chloride ions against protons. May play an important role in neuronal cell function through regulation of membrane excitability by protein kinase C. It could help neuronal cells to establish short-term memory. The protein is H(+)/Cl(-) exchange transporter 3 (Clcn3) of Rattus norvegicus (Rat).